Reading from the N-terminus, the 356-residue chain is S-adenosylmethionine:tRNA ribosyltransferase-isomerase (356 aa).

The protein belongs to the QueA family. Monomer.

It is found in the cytoplasm. It catalyses the reaction 7-aminomethyl-7-carbaguanosine(34) in tRNA + S-adenosyl-L-methionine = epoxyqueuosine(34) in tRNA + adenine + L-methionine + 2 H(+). Its pathway is tRNA modification; tRNA-queuosine biosynthesis. Transfers and isomerizes the ribose moiety from AdoMet to the 7-aminomethyl group of 7-deazaguanine (preQ1-tRNA) to give epoxyqueuosine (oQ-tRNA). In Histophilus somni (strain 2336) (Haemophilus somnus), this protein is S-adenosylmethionine:tRNA ribosyltransferase-isomerase.